The primary structure comprises 355 residues: Aromatic amino acid aminotransferase (355 aa).

K217 carries the post-translational modification N6-(pyridoxal phosphate)lysine.

It belongs to the class-II pyridoxal-phosphate-dependent aminotransferase family. As to quaternary structure, homodimer. Pyridoxal 5'-phosphate is required as a cofactor.

The enzyme catalyses an aromatic L-alpha-amino acid + 2-oxoglutarate = an aromatic oxo-acid + L-glutamate. Functionally, aminotransferase that catalyzes the conversion of aromatic amino acids and 2-oxoglutarate into corresponding aromatic oxo acids and L-glutamate. The sequence is that of Aromatic amino acid aminotransferase from Mycobacterium avium (strain 104).